The following is a 512-amino-acid chain: Cytochrome P450 monooxygenase paxQ (512 aa).

2 consecutive transmembrane segments (helical) span residues 3 to 23 (FVLS…LVSI) and 35 to 55 (LQIP…ISAL). Heme is bound at residue C453.

It belongs to the cytochrome P450 family. Heme serves as cofactor.

Its subcellular location is the membrane. It functions in the pathway secondary metabolite biosynthesis. Cytochrome P450 monooxygenase; part of the gene cluster that mediates the biosynthesis of paxilline, a mycotoxin that acts as an inhibitor of mammalian maxi-K channels. PaxG, the geranylgeranyl diphosphate (GGPP) synthase is proposed to catalyze the first step in paxilline biosynthesis. Condensation of indole-3-glycerol phosphate with GGPP by paxC then forms 3-geranylgeranylindole (3-GGI), followed by epoxidation and cyclization of this intermediate (by paxM and paxB) to form paspaline. Paspaline is subsequently converted to 13-desoxypaxilline by paxP, the latter being then converted to paxilline by paxQ. Finally paxilline can be mono- and di-prenylated by paxD. PaxQ can also utilized beta-paxitriol and alpha-PC-M6 as substrates converting them to alpha-paxitriol. This Penicillium paxilli protein is Cytochrome P450 monooxygenase paxQ.